Consider the following 514-residue polypeptide: Peptide chain release factor 3 (514 aa).

The region spanning 8–268 (KKRRTFAIIS…TFLEFAPEPH (261 aa)) is the tr-type G domain. GTP-binding positions include 17–24 (SHPDAGKT), 85–89 (DTPGH), and 139–142 (NKLD).

Belongs to the TRAFAC class translation factor GTPase superfamily. Classic translation factor GTPase family. PrfC subfamily.

The protein localises to the cytoplasm. Its function is as follows. Increases the formation of ribosomal termination complexes and stimulates activities of RF-1 and RF-2. It binds guanine nucleotides and has strong preference for UGA stop codons. It may interact directly with the ribosome. The stimulation of RF-1 and RF-2 is significantly reduced by GTP and GDP, but not by GMP. The sequence is that of Peptide chain release factor 3 from Streptococcus pyogenes serotype M28 (strain MGAS6180).